We begin with the raw amino-acid sequence, 131 residues long: Protein anoxia up-regulated (131 aa).

Residues M1 to V24 show a composition bias toward polar residues. Residues M1 to G121 are disordered. Composition is skewed to low complexity over residues S44–S53 and T98–G116.

As to expression, concentrated in lamina neurons, first optic lobe neurons and cortical neurons of central brain.

Functionally, plays an important role in the regulation of tissue responsiveness to oxygen deprivation. This Drosophila melanogaster (Fruit fly) protein is Protein anoxia up-regulated.